A 243-amino-acid chain; its full sequence is DNA repair protein RecO (243 aa).

Belongs to the RecO family.

Functionally, involved in DNA repair and RecF pathway recombination. This chain is DNA repair protein RecO, found in Phenylobacterium zucineum (strain HLK1).